We begin with the raw amino-acid sequence, 89 residues long: Small ribosomal subunit protein uS15 (89 aa).

This sequence belongs to the universal ribosomal protein uS15 family. Part of the 30S ribosomal subunit. Forms a bridge to the 50S subunit in the 70S ribosome, contacting the 23S rRNA.

Its function is as follows. One of the primary rRNA binding proteins, it binds directly to 16S rRNA where it helps nucleate assembly of the platform of the 30S subunit by binding and bridging several RNA helices of the 16S rRNA. In terms of biological role, forms an intersubunit bridge (bridge B4) with the 23S rRNA of the 50S subunit in the ribosome. The sequence is that of Small ribosomal subunit protein uS15 from Leuconostoc citreum (strain KM20).